A 250-amino-acid chain; its full sequence is tRNA (guanine-N(1)-)-methyltransferase (250 aa).

S-adenosyl-L-methionine contacts are provided by residues Gly116 and 136–141 (IGDYVL).

The protein belongs to the RNA methyltransferase TrmD family. Homodimer.

The protein localises to the cytoplasm. The enzyme catalyses guanosine(37) in tRNA + S-adenosyl-L-methionine = N(1)-methylguanosine(37) in tRNA + S-adenosyl-L-homocysteine + H(+). Functionally, specifically methylates guanosine-37 in various tRNAs. The chain is tRNA (guanine-N(1)-)-methyltransferase from Pseudomonas savastanoi pv. phaseolicola (strain 1448A / Race 6) (Pseudomonas syringae pv. phaseolicola (strain 1448A / Race 6)).